The primary structure comprises 44 residues: DNA-directed RNA polymerase subunit Rpo12 (44 aa).

Residues C8, C22, and C25 each contribute to the Zn(2+) site.

Belongs to the archaeal Rpo12/eukaryotic RPC10 RNA polymerase subunit family. In terms of assembly, part of the RNA polymerase complex. Zn(2+) is required as a cofactor.

It is found in the cytoplasm. The catalysed reaction is RNA(n) + a ribonucleoside 5'-triphosphate = RNA(n+1) + diphosphate. DNA-dependent RNA polymerase (RNAP) catalyzes the transcription of DNA into RNA using the four ribonucleoside triphosphates as substrates. The chain is DNA-directed RNA polymerase subunit Rpo12 from Natronomonas pharaonis (strain ATCC 35678 / DSM 2160 / CIP 103997 / JCM 8858 / NBRC 14720 / NCIMB 2260 / Gabara) (Halobacterium pharaonis).